A 181-amino-acid polypeptide reads, in one-letter code: Adenine phosphoribosyltransferase (181 aa).

Belongs to the purine/pyrimidine phosphoribosyltransferase family. As to quaternary structure, homodimer.

The protein localises to the cytoplasm. The enzyme catalyses AMP + diphosphate = 5-phospho-alpha-D-ribose 1-diphosphate + adenine. The protein operates within purine metabolism; AMP biosynthesis via salvage pathway; AMP from adenine: step 1/1. Its function is as follows. Catalyzes a salvage reaction resulting in the formation of AMP, that is energically less costly than de novo synthesis. In Shewanella loihica (strain ATCC BAA-1088 / PV-4), this protein is Adenine phosphoribosyltransferase.